Here is a 346-residue protein sequence, read N- to C-terminus: Phosphoribosylformylglycinamidine cyclo-ligase (346 aa).

This sequence belongs to the AIR synthase family.

Its subcellular location is the cytoplasm. It carries out the reaction 2-formamido-N(1)-(5-O-phospho-beta-D-ribosyl)acetamidine + ATP = 5-amino-1-(5-phospho-beta-D-ribosyl)imidazole + ADP + phosphate + H(+). It functions in the pathway purine metabolism; IMP biosynthesis via de novo pathway; 5-amino-1-(5-phospho-D-ribosyl)imidazole from N(2)-formyl-N(1)-(5-phospho-D-ribosyl)glycinamide: step 2/2. The sequence is that of Phosphoribosylformylglycinamidine cyclo-ligase from Photobacterium profundum (strain SS9).